Here is a 382-residue protein sequence, read N- to C-terminus: Trophoblast glycoprotein-like (382 aa).

A signal peptide spans 1–26; that stretch reads MAPRAGQPGLQGLLLVAAALSQPAAP. 2 cysteine pairs are disulfide-bonded: Cys27/Cys33 and Cys31/Cys43. Residues 27-307 lie on the Extracellular side of the membrane; the sequence is CPFQCYCFGG…EAAGPELEAS (281 aa). LRR repeat units follow at residues 57–80, 93–116, 117–140, 171–194, and 196–217; these read PPDA…AFAG, LPLL…AFDG, LPSL…AFRG, LAEL…ALRL, and RLEQ…ELRA. Asn62 is a glycosylation site (N-linked (GlcNAc...) asparagine). 2 cysteine pairs are disulfide-bonded: Cys238/Cys264 and Cys240/Cys285. Residues 308-328 form a helical membrane-spanning segment; the sequence is YVFFGLVLALIGLIFLMVLYL. Residues 329-382 lie on the Cytoplasmic side of the membrane; the sequence is NRRGIQRWMRNLREACRDQMEGYHYRYEQDADPRRAPAPAAPAGSRATSPGSGL. Positions 358-382 are disordered; that stretch reads DADPRRAPAPAAPAGSRATSPGSGL. Residues 365-382 are compositionally biased toward low complexity; sequence PAPAAPAGSRATSPGSGL.

Its subcellular location is the membrane. This is Trophoblast glycoprotein-like (TPBGL) from Homo sapiens (Human).